Consider the following 87-residue polypeptide: U3-theraphotoxin-Cg1c (87 aa).

The signal sequence occupies residues 1–23 (MRTFTLIAILTCAVLVIFHVSAA). The propeptide occupies 24–51 (EELEAQDVIQPEDIFTGVATLEEDRIFE). 3 disulfide bridges follow: Cys-52-Cys-65, Cys-56-Cys-79, and Cys-73-Cys-84.

It belongs to the neurotoxin 12 (Hwtx-2) family. 03 (juruin) subfamily. Expressed by the venom gland.

The protein resides in the secreted. Functionally, probable ion channel inhibitor. The polypeptide is U3-theraphotoxin-Cg1c (Chilobrachys guangxiensis (Chinese earth tiger tarantula)).